A 101-amino-acid polypeptide reads, in one-letter code: Movement protein (101 aa).

A helical transmembrane segment spans residues 30–50; that stretch reads EVAILSFVALICIYLLYLWVL. The tract at residues 80 to 101 is disordered; sequence PIPNTLEPTAPVHPGPFVPGQG. Over residues 90 to 101 the composition is skewed to pro residues; it reads PVHPGPFVPGQG.

It belongs to the mastrevirus movement protein family. Interacts with the capsid protein (CP). Part of a MP-CP-viral DNA complex.

The protein resides in the host membrane. In terms of biological role, involved in the viral transport within, and between cells. The polypeptide is Movement protein (Avena sativa (Oat)).